A 218-amino-acid polypeptide reads, in one-letter code: Small ribosomal subunit protein uS5 (218 aa).

An S5 DRBM domain is found at 66 to 129 (LKQELLNVNL…REAKLNLVPV (64 aa)).

Belongs to the universal ribosomal protein uS5 family. Part of the 30S ribosomal subunit. Contacts protein S4.

Its function is as follows. With S4 and S12 plays an important role in translational accuracy. This Pyrobaculum aerophilum (strain ATCC 51768 / DSM 7523 / JCM 9630 / CIP 104966 / NBRC 100827 / IM2) protein is Small ribosomal subunit protein uS5.